The chain runs to 277 residues: Large ribosomal subunit protein uL2 (277 aa).

Disordered stretches follow at residues 36-55 (PLPKKAGRNNQGKLTVRHHG) and 213-277 (WKGI…RKKK).

The protein belongs to the universal ribosomal protein uL2 family. In terms of assembly, part of the 50S ribosomal subunit. Forms a bridge to the 30S subunit in the 70S ribosome.

Its function is as follows. One of the primary rRNA binding proteins. Required for association of the 30S and 50S subunits to form the 70S ribosome, for tRNA binding and peptide bond formation. It has been suggested to have peptidyltransferase activity; this is somewhat controversial. Makes several contacts with the 16S rRNA in the 70S ribosome. The polypeptide is Large ribosomal subunit protein uL2 (Staphylococcus aureus (strain bovine RF122 / ET3-1)).